Consider the following 398-residue polypeptide: Histone-lysine N-methyltransferase ASHR2 (398 aa).

An SET domain is found at 11 to 270 (TLLRVAEIGG…EGREVCLSYF (260 aa)).

This sequence belongs to the class V-like SAM-binding methyltransferase superfamily. Histone-lysine methyltransferase family. SET2 subfamily.

Its subcellular location is the nucleus. It is found in the chromosome. The catalysed reaction is L-lysyl-[histone] + S-adenosyl-L-methionine = N(6)-methyl-L-lysyl-[histone] + S-adenosyl-L-homocysteine + H(+). Functionally, histone methyltransferase. This chain is Histone-lysine N-methyltransferase ASHR2 (ASHR2), found in Arabidopsis thaliana (Mouse-ear cress).